The chain runs to 179 residues: Ribosome maturation factor RimM (179 aa).

The PRC barrel domain maps to 102–179 (DGEYYWYQLE…EMKVDWDADF (78 aa)).

The protein belongs to the RimM family. In terms of assembly, binds ribosomal protein uS19.

The protein resides in the cytoplasm. An accessory protein needed during the final step in the assembly of 30S ribosomal subunit, possibly for assembly of the head region. Essential for efficient processing of 16S rRNA. May be needed both before and after RbfA during the maturation of 16S rRNA. It has affinity for free ribosomal 30S subunits but not for 70S ribosomes. The sequence is that of Ribosome maturation factor RimM from Pseudomonas savastanoi pv. phaseolicola (strain 1448A / Race 6) (Pseudomonas syringae pv. phaseolicola (strain 1448A / Race 6)).